A 197-amino-acid polypeptide reads, in one-letter code: Phospholipid hydroperoxide glutathione peroxidase (197 aa).

Serine 40 carries the phosphoserine modification. Selenocysteine 73 is an active-site residue. Residue selenocysteine 73 is a non-standard amino acid, selenocysteine.

It belongs to the glutathione peroxidase family. In terms of assembly, monomer. Has a tendency to form higher mass oligomers. Interacts with FUNDC1; this interaction promotes GPX4 recruitment into mitochondria through TOM/TIM complex where it is degraded by mitophagy.

Its subcellular location is the mitochondrion. The protein localises to the cytoplasm. It catalyses the reaction a hydroperoxy polyunsaturated fatty acid + 2 glutathione = a hydroxy polyunsaturated fatty acid + glutathione disulfide + H2O. It carries out the reaction 2 glutathione + H2O2 = glutathione disulfide + 2 H2O. The enzyme catalyses tert-butyl hydroperoxide + 2 glutathione = tert-butanol + glutathione disulfide + H2O. The catalysed reaction is cumene hydroperoxide + 2 glutathione = 2-phenylpropan-2-ol + glutathione disulfide + H2O. It catalyses the reaction (9S)-hydroperoxy-(10E,12Z)-octadecadienoate + 2 glutathione = (9S)-hydroxy-(10E,12Z)-octadecadienoate + glutathione disulfide + H2O. It carries out the reaction (13S)-hydroperoxy-(9Z,11E)-octadecadienoate + 2 glutathione = (13S)-hydroxy-(9Z,11E)-octadecadienoate + glutathione disulfide + H2O. The enzyme catalyses (5S)-hydroperoxy-(6E,8Z,11Z,14Z)-eicosatetraenoate + 2 glutathione = (5S)-hydroxy-(6E,8Z,11Z,14Z)-eicosatetraenoate + glutathione disulfide + H2O. The catalysed reaction is (12R)-hydroperoxy-(5Z,8Z,10E,14Z)-eicosatetraenoate + 2 glutathione = (12R)-hydroxy-(5Z,8Z,10E,14Z)-eicosatetraenoate + glutathione disulfide + H2O. It catalyses the reaction (12S)-hydroperoxy-(5Z,8Z,10E,14Z)-eicosatetraenoate + 2 glutathione = (12S)-hydroxy-(5Z,8Z,10E,14Z)-eicosatetraenoate + glutathione disulfide + H2O. It carries out the reaction (15S)-hydroperoxy-(5Z,8Z,11Z,13E)-eicosatetraenoate + 2 glutathione = (15S)-hydroxy-(5Z,8Z,11Z,13E)-eicosatetraenoate + glutathione disulfide + H2O. The enzyme catalyses (5S)-hydroperoxy-(6E,8Z,11Z,14Z,17Z)-eicosapentaenoate + 2 glutathione = (5S)-hydroxy-(6E,8Z,11Z,14Z,17Z)-eicosapentaenoate + glutathione disulfide + H2O. The catalysed reaction is (12S)-hydroperoxy-(5Z,8Z,10E,14Z,17Z)-eicosapentaenoate + 2 glutathione = (12S)-hydroxy-(5Z,8Z,10E,14Z,17Z)-eicosapentaenoate + glutathione disulfide + H2O. It catalyses the reaction (15S)-hydroperoxy-(5Z,8Z,11Z,13E,17Z)-eicosapentaenoate + 2 glutathione = (15S)-hydroxy-(5Z,8Z,11Z,13E,17Z)-eicosapentaenoate + glutathione disulfide + H2O. It carries out the reaction (15S)-hydroperoxy-(11Z,13E)-eicosadienoate + 2 glutathione = (15S)-hydroxy-(11Z,13E)-eicosadienoate + glutathione disulfide + H2O. The enzyme catalyses (17S)-hydroperoxy-(4Z,7Z,10Z,13Z,15E,19Z)-docosahexaenoate + 2 glutathione = (17S)-hydroxy-(4Z,7Z,10Z,13Z,15E,19Z)-docosahexaenoate + glutathione disulfide + H2O. The catalysed reaction is a hydroperoxy-1,2-diacyl-glycero-3-phosphocholine + 2 glutathione = a hydroxy-1,2-diacyl-glycero-3-phosphocholine + glutathione disulfide + H2O. In terms of biological role, essential antioxidant peroxidase that directly reduces phospholipid hydroperoxide even if they are incorporated in membranes and lipoproteins. Can also reduce fatty acid hydroperoxide, cholesterol hydroperoxide and thymine hydroperoxide. Plays a key role in protecting cells from oxidative damage by preventing membrane lipid peroxidation. Required to prevent cells from ferroptosis, a non-apoptotic cell death resulting from an iron-dependent accumulation of lipid reactive oxygen species. The presence of selenocysteine (Sec) versus Cys at the active site is essential for life: it provides resistance to overoxidation and prevents cells against ferroptosis. The presence of Sec at the active site is also essential for the survival of a specific type of parvalbumin-positive interneurons, thereby preventing against fatal epileptic seizures. May be required to protect cells from the toxicity of ingested lipid hydroperoxides. Required for normal sperm development and male fertility. Essential for maturation and survival of photoreceptor cells. Plays a role in a primary T-cell response to viral and parasitic infection by protecting T-cells from ferroptosis and by supporting T-cell expansion. Plays a role of glutathione peroxidase in platelets in the arachidonic acid metabolism. Reduces hydroperoxy ester lipids formed by a 15-lipoxygenase that may play a role as down-regulator of the cellular 15-lipoxygenase pathway. Can also reduce small soluble hydroperoxides such as H2O2, cumene hydroperoxide and tert-butyl hydroperoxide. This chain is Phospholipid hydroperoxide glutathione peroxidase, found in Sus scrofa (Pig).